Reading from the N-terminus, the 229-residue chain is DNA mismatch repair protein MutH (229 aa).

The protein belongs to the MutH family.

The protein localises to the cytoplasm. In terms of biological role, sequence-specific endonuclease that cleaves unmethylated GATC sequences. It is involved in DNA mismatch repair. The protein is DNA mismatch repair protein MutH of Shigella flexneri serotype 5b (strain 8401).